A 448-amino-acid polypeptide reads, in one-letter code: Histidinol dehydrogenase (448 aa).

Residues Y136, Q197, and N220 each contribute to the NAD(+) site. Substrate contacts are provided by S243, Q265, and H268. Q265 and H268 together coordinate Zn(2+). Residues E333 and H334 each act as proton acceptor in the active site. The substrate site is built by H334, D367, E421, and H426. D367 lines the Zn(2+) pocket. H426 is a binding site for Zn(2+).

This sequence belongs to the histidinol dehydrogenase family. Zn(2+) serves as cofactor.

It carries out the reaction L-histidinol + 2 NAD(+) + H2O = L-histidine + 2 NADH + 3 H(+). The protein operates within amino-acid biosynthesis; L-histidine biosynthesis; L-histidine from 5-phospho-alpha-D-ribose 1-diphosphate: step 9/9. Its function is as follows. Catalyzes the sequential NAD-dependent oxidations of L-histidinol to L-histidinaldehyde and then to L-histidine. The chain is Histidinol dehydrogenase from Pseudomonas savastanoi pv. phaseolicola (strain 1448A / Race 6) (Pseudomonas syringae pv. phaseolicola (strain 1448A / Race 6)).